A 153-amino-acid chain; its full sequence is Fucose mutarotase (153 aa).

His24 acts as the Proton donor in catalysis. Asp32 is a binding site for substrate. Asp69 is an active-site residue. Substrate contacts are provided by Met79, Tyr120, Tyr138, and Asn140. Residue Tyr120 is part of the active site.

Belongs to the RbsD / FucU family. Mainly homodimer, but also exists as homotetramer, homooctamer, and homodecamer. The homodimeric form seems catalytically inactive. As to expression, widely expressed in various tissues and cell lines, including kidney, liver, and pancreas, marginally in muscle and testis.

It carries out the reaction alpha-L-fucose = beta-L-fucose. It functions in the pathway carbohydrate metabolism; L-fucose metabolism. Involved in the interconversion between alpha- and beta-L-fucoses. L-Fucose (6-deoxy-L-galactose) exists as alpha-L-fucose (29.5%) and beta-L-fucose (70.5%), the beta-form is metabolized through the salvage pathway. GDP-L-fucose formed either by the de novo or salvage pathways is transported into the endoplasmic reticulum, where it serves as a substrate for N- and O-glycosylations by fucosyltransferases. Fucosylated structures expressed on cell surfaces or secreted in biological fluids are believed to play a critical role in cell-cell adhesion and recognition processes. This is Fucose mutarotase (Fuom) from Mus musculus (Mouse).